The following is a 1448-amino-acid chain: MWKNREAQLCLFSVLLAFLPSASLLFGNSKYMVLVPSQLYTETPEKICLHLYHLNETVTVTASLISQRGTRKLFDEPVVDKDLFHCVSFIPRLPSSEEEESLDINIEGAKHKFSKRHVVLVKNKESVVFVQTDKPMYKPGQSVKFRVVSMDKNLYPLKELVQDPKMNRIMQWQDVKTENGLKQLSFSLSAEPIQGPYKIVVLKQSGVKEEHSFTVMEFVLPRFGVDVKVPNAISVYDEIISVTACDRYTYGKPVLGRVKVRLCHGNPSFSSETKSACKEENSQLDNNGCSTQEVNITEFQLKENYLKVRQAFHVNATVTEEGTGMEFGGYGRIEVERTRNKFLFLKADSHFRHGIPFFVKVRLVDIKGDPIPNEQVFIKAQEAGYTNATTTDQHGLAKFSIDTSSISGYSLNIKVYHKEENLCIHSSCTAERHAEAHHTAYAVYSLSKSYIYLDTEAGVLPCNQIHTVQAHFILKGQVLGVLPQIVFHYLVMAQGSILQTGNHTHQVESGAPVQGNFALEIPVEFSMVPMAKMLIYTILPDGEVIADSVKFQVEKCLRNKVHLSFSPSQSLPASQTHMRVTASPQSLCGLRAVDQSVLLLRPEAELSPSLIYDLPGMQDSNFIPRSHHPFEDEDDCLMYQPRDTEELTYSVPYGREKDVYRYVDMGLTAFTNLKIKHPTYCYDLPKEPPRKDPPRKDPEPKDTVVETIRNYFPETWVWDLVTVSSSGVTEVEMTVPDTITEWKAGALCLSNDTGLGLSSVATLQAFQPFFVELTMPYSVIRGEAFTLKATVMNYLPTSLQMTVQLEASPDFTAVPVGNDQDSYCLGANGRHTSSWLVTPKSLGNVNFSVSVEAQQSPEPCGSEVATVPETGRKDTVIKVLIVEPEGIKKEHTFSSLLCASDAELSETLSLLLPPRVVKDSARAHFSVMGDILSSAIKNTQNLIQMPYGCGEQNMVLFAPNIYVLKYLNETQQLTENIKSKALGYLRAGYQRELNYKHKDGSYSAFGDHNGQGQGNTWLTAFVLKSFAQARAFIFIDESHITDAFTWLSKQQKDSGCFRSSGSLFNNAMKGGVDDEITLSAYITMALLESSLPPVVSKALGCLEASWETIEQGRNGSFVYTKALMAYAFTLAGNQEKRNEILKSLDKEAIKEDNSIHWERPQKPMKSEHYLYTPQASSVEVEMSAYVVLARLTAHPAPSPEDLALSTGTIKWLTKQQNSHGGFSSTQDTVVALDALSKYGAATFSKSQKTPSVTVQSSGSFSQKFQVDKSNRLLLQQVSLPDIPGNYTIRVSGEGCVYAQTTLRYNLPLEKQQPAFALKVKTVPLTCNNPKGQNSFQISLEISYTGSRPASNMVIADVKMLSGFIPLKPTVKKLERLEHVSRTEVTTNNVLLYLDQVTNQTLSFSFIIQQDIPVKNLQPAIVKVYDYYETDEVAFAEYSSPCSSDKQNV.

The N-terminal stretch at 1–24 (MWKNREAQLCLFSVLLAFLPSASL) is a signal peptide. 3 cysteine pairs are disulfide-bonded: Cys48–Cys86, Cys245–Cys277, and Cys263–Cys289. N-linked (GlcNAc...) asparagine glycosylation is present at Asn55. 4 N-linked (GlcNAc...) asparagine glycosylation sites follow: Asn295, Asn315, Asn387, and Asn502. 3 disulfides stabilise this stretch: Cys462/Cys556, Cys588/Cys748, and Cys636/Cys681. Positions 678–709 (PTYCYDLPKEPPRKDPPRKDPEPKDTVVETIR) are bait region. Residues Asn751 and Asn846 are each glycosylated (N-linked (GlcNAc...) asparagine). Intrachain disulfides connect Cys824–Cys860, Cys898–Cys1295, Cys1056–Cys1101, and Cys1326–Cys1441. The segment at residues 949 to 952 (CGEQ) is a cross-link (isoglutamyl cysteine thioester (Cys-Gln)). The N-linked (GlcNAc...) asparagine glycan is linked to Asn968. N-linked (GlcNAc...) asparagine glycosylation is found at Asn1114, Asn1285, and Asn1398.

It belongs to the protease inhibitor I39 (alpha-2-macroglobulin) family. In terms of assembly, monomer.

It localises to the secreted. Its function is as follows. A proteinase activates the inhibitor by specific proteolysis in the bait region, which, by an unknown mechanism leads to reaction at the cysteinyl-glutamyl internal thiol ester site and to a conformational change, whereby the proteinase is trapped and/or covalently bound to the inhibitor. While in the tetrameric proteinase inhibitors steric inhibition is sufficiently strong, monomeric forms need a covalent linkage between the activated glutamyl residue of the original thiol ester and a terminal amino group of a lysine or another nucleophilic group on the proteinase, for inhibition to be effective. This is Murinoglobulin-2 from Rattus norvegicus (Rat).